The sequence spans 153 residues: Transcription antitermination protein NusB (153 aa).

The protein belongs to the NusB family.

Functionally, involved in transcription antitermination. Required for transcription of ribosomal RNA (rRNA) genes. Binds specifically to the boxA antiterminator sequence of the ribosomal RNA (rrn) operons. This is Transcription antitermination protein NusB from Fusobacterium nucleatum subsp. nucleatum (strain ATCC 25586 / DSM 15643 / BCRC 10681 / CIP 101130 / JCM 8532 / KCTC 2640 / LMG 13131 / VPI 4355).